The primary structure comprises 375 residues: Chlorophyll a/b light-harvesting protein PcbC (375 aa).

6 helical membrane-spanning segments follow: residues 40 to 60, 102 to 122, 151 to 171, 225 to 245, 262 to 282, and 300 to 320; these read LLGA…SITV, YFVI…GGLF, LSLI…AFVA, IIGG…WHIL, AILS…GFFV, and GAAA…VWHA. The interval 352–375 is disordered; that stretch reads ARTFIGRGKPQPEPPKKKGLFGRG.

Belongs to the PsbB/PsbC family. IsiA/Pcb subfamily. As to quaternary structure, the antenna complex consists of chlorophylls (a and b) and chlorophyll a/b binding proteins. The cofactor is chlorophyll a. Chlorophyll b is required as a cofactor.

It localises to the cellular thylakoid membrane. Its function is as follows. The antenna complex functions as a light receptor, it captures and delivers excitation energy to photosystems II and I. The Prochlorales pcb genes are not related to higher plant LHCs. The chain is Chlorophyll a/b light-harvesting protein PcbC (pcbC) from Prochlorothrix hollandica.